Here is a 454-residue protein sequence, read N- to C-terminus: Glutamine synthetase (454 aa).

One can recognise a GS beta-grasp domain in the interval 19 to 111; sequence NNVKFIRFQF…VICDVYKDEK (93 aa). One can recognise a GS catalytic domain in the interval 118–454; sequence PRSRLKAILE…DWETGKYLIY (337 aa). Mg(2+)-binding residues include E142 and E144. E194 lines the ATP pocket. Residues E199 and E206 each contribute to the Mg(2+) site. L-glutamate is bound by residues 250–251 and G251; that span reads NG. Residue H255 participates in Mg(2+) binding. Residues 257–259 and S259 each bind ATP; that span reads HQS. L-glutamate is bound by residues R309, E315, and R327. Residues R327, R332, and K339 each coordinate ATP. E344 contacts Mg(2+). Position 346 (R346) interacts with L-glutamate.

It belongs to the glutamine synthetase family. Oligomer of 12 subunits arranged in the form of two hexagons. Mg(2+) serves as cofactor.

It is found in the cytoplasm. It carries out the reaction L-glutamate + NH4(+) + ATP = L-glutamine + ADP + phosphate + H(+). Feedback inhibited by glycine and alanine, and inhibited by low concentrations of methionine sulfoximine. Its function is as follows. Probably involved in nitrogen metabolism via ammonium assimilation. Catalyzes the ATP-dependent biosynthesis of glutamine from glutamate and ammonia. Beta-glutamate is a much poorer substrate than alpha-glutamate. This chain is Glutamine synthetase, found in Methanocaldococcus jannaschii (strain ATCC 43067 / DSM 2661 / JAL-1 / JCM 10045 / NBRC 100440) (Methanococcus jannaschii).